The following is a 74-amino-acid chain: Translation initiation factor IF-1 (74 aa).

Residues 1 to 73 (MAKKDDIIEF…TKGRITYRGK (73 aa)) enclose the S1-like domain.

It belongs to the IF-1 family. Component of the 30S ribosomal translation pre-initiation complex which assembles on the 30S ribosome in the order IF-2 and IF-3, IF-1 and N-formylmethionyl-tRNA(fMet); mRNA recruitment can occur at any time during PIC assembly.

The protein localises to the cytoplasm. In terms of biological role, one of the essential components for the initiation of protein synthesis. Stabilizes the binding of IF-2 and IF-3 on the 30S subunit to which N-formylmethionyl-tRNA(fMet) subsequently binds. Helps modulate mRNA selection, yielding the 30S pre-initiation complex (PIC). Upon addition of the 50S ribosomal subunit IF-1, IF-2 and IF-3 are released leaving the mature 70S translation initiation complex. The protein is Translation initiation factor IF-1 of Psychrobacter sp. (strain PRwf-1).